The primary structure comprises 457 residues: Solute carrier family 38 member 6 (457 aa).

M1 carries the post-translational modification N-acetylmethionine. Residues S4 and S7 each carry the phosphoserine modification. 5 helical membrane passes run 48–68 (FGLS…LGLA), 70–90 (VMAN…ALLA), 112–132 (LGLF…IIIQ), 171–191 (LLII…KIGF), and 192–212 (LGYT…VVVI). An intrachain disulfide couples C219 to C239. The next 6 membrane-spanning stretches (helical) occupy residues 251–271 (VYAI…LPIY), 289–309 (AIAL…LTFY), 328–348 (VIVM…APLI), 372–392 (SLTT…VPDI), 395–415 (VFGV…PGLF), and 432–452 (ALFL…LIIF).

Belongs to the amino acid/polyamine transporter 2 family. As to expression, expressed exclusively in neurons and not in astrocytes and glia cells. Highly expressed in the synapse. Highly expressed in glutamatergic neurons. Primarily expressed in excitatory neurons, with some minor expression in inhibitory neurons.

The protein resides in the cell membrane. The protein localises to the synapse. The enzyme catalyses L-glutamine(out) = L-glutamine(in). The catalysed reaction is L-glutamate(out) = L-glutamate(in). Its function is as follows. Amino acid transporter with an apparent selectivity for L-glutamine and L-glutamate. May facilitate glutamine uptake in excitatory neurons. The transport mechanism remains to be elucidated. This chain is Solute carrier family 38 member 6, found in Mus musculus (Mouse).